We begin with the raw amino-acid sequence, 100 residues long: Apolipoprotein C-II (100 aa).

The N-terminal stretch at 1 to 22 (MGSRFLLALFLVLLVLGYEVQG) is a signal peptide. The segment at 66 to 74 (SVDEKLRDM) is lipid binding. Residues 78 to 100 (SSAAVSTYAGIFTDQILTLLKGE) are lipoprotein lipase cofactor.

Belongs to the apolipoprotein C2 family. In terms of processing, proapolipoprotein C-II is synthesized as a sialic acid containing glycoprotein which is subsequently desialylated prior to its proteolytic processing. Proapolipoprotein C-II, the major form found in plasma undergoes proteolytic cleavage of its N-terminal hexapeptide to generate the mature form apolipoprotein C-II, which occurs as the minor form in plasma.

The protein resides in the secreted. Component of chylomicrons, very low-density lipoproteins (VLDL), low-density lipoproteins (LDL), and high-density lipoproteins (HDL) in plasma. Plays an important role in lipoprotein metabolism as an activator of lipoprotein lipase. This is Apolipoprotein C-II (Apoc2) from Neotoma lepida (Desert woodrat).